The primary structure comprises 642 residues: Threonine--tRNA ligase (642 aa).

The region spanning 1–61 (MPIITLPDGS…EHDASLEIIT (61 aa)) is the TGS domain. The interval 244-535 (DHRKIGKQLD…LIEEYAGFFP (292 aa)) is catalytic. Zn(2+) contacts are provided by Cys335, His386, and His512.

The protein belongs to the class-II aminoacyl-tRNA synthetase family. As to quaternary structure, homodimer. Zn(2+) is required as a cofactor.

It is found in the cytoplasm. The enzyme catalyses tRNA(Thr) + L-threonine + ATP = L-threonyl-tRNA(Thr) + AMP + diphosphate + H(+). Its function is as follows. Catalyzes the attachment of threonine to tRNA(Thr) in a two-step reaction: L-threonine is first activated by ATP to form Thr-AMP and then transferred to the acceptor end of tRNA(Thr). Also edits incorrectly charged L-seryl-tRNA(Thr). This is Threonine--tRNA ligase from Vibrio cholerae serotype O1 (strain M66-2).